The following is a 99-amino-acid chain: MNPDNYLHLSALLFTIGAAGVLLRRNVIVVFMCVELMLNAANLAFVAFSRMHGQLDGQVVAFFTMVVAACEVVIGLAIIMTIYRARRSASVDDANLLKH.

3 consecutive transmembrane segments (helical) span residues 3-23 (PDNY…GVLL), 28-48 (IVVF…FVAF), and 59-79 (VVAF…LAII).

This sequence belongs to the complex I subunit 4L family. In terms of assembly, NDH-1 is composed of 14 different subunits. Subunits NuoA, H, J, K, L, M, N constitute the membrane sector of the complex.

It is found in the cell membrane. The catalysed reaction is a quinone + NADH + 5 H(+)(in) = a quinol + NAD(+) + 4 H(+)(out). NDH-1 shuttles electrons from NADH, via FMN and iron-sulfur (Fe-S) centers, to quinones in the respiratory chain. The immediate electron acceptor for the enzyme in this species is believed to be a menaquinone. Couples the redox reaction to proton translocation (for every two electrons transferred, four hydrogen ions are translocated across the cytoplasmic membrane), and thus conserves the redox energy in a proton gradient. The chain is NADH-quinone oxidoreductase subunit K from Mycobacterium sp. (strain KMS).